The primary structure comprises 164 residues: Cyanate hydratase (164 aa).

Active-site residues include arginine 90, glutamate 93, and serine 116.

This sequence belongs to the cyanase family.

It carries out the reaction cyanate + hydrogencarbonate + 3 H(+) = NH4(+) + 2 CO2. Its function is as follows. Catalyzes the reaction of cyanate with bicarbonate to produce ammonia and carbon dioxide. The chain is Cyanate hydratase from Vitis vinifera (Grape).